The chain runs to 31 residues: Cytochrome b6-f complex subunit 6 (31 aa).

Residues 3–23 (TITSYFGFLLAVLTITSGLFI) traverse the membrane as a helical segment.

This sequence belongs to the PetL family. In terms of assembly, the 4 large subunits of the cytochrome b6-f complex are cytochrome b6, subunit IV (17 kDa polypeptide, PetD), cytochrome f and the Rieske protein, while the 4 small subunits are PetG, PetL, PetM and PetN. The complex functions as a dimer.

It localises to the plastid. The protein localises to the chloroplast thylakoid membrane. In terms of biological role, component of the cytochrome b6-f complex, which mediates electron transfer between photosystem II (PSII) and photosystem I (PSI), cyclic electron flow around PSI, and state transitions. PetL is important for photoautotrophic growth as well as for electron transfer efficiency and stability of the cytochrome b6-f complex. The protein is Cytochrome b6-f complex subunit 6 of Lotus japonicus (Lotus corniculatus var. japonicus).